The following is a 278-amino-acid chain: 3-methyl-2-oxobutanoate hydroxymethyltransferase (278 aa).

Positions 52 and 91 each coordinate Mg(2+). 3-methyl-2-oxobutanoate-binding positions include 52–53 (DS), D91, and K121. E123 is a Mg(2+) binding site. E190 functions as the Proton acceptor in the catalytic mechanism.

Belongs to the PanB family. As to quaternary structure, homodecamer; pentamer of dimers. It depends on Mg(2+) as a cofactor.

The protein resides in the cytoplasm. It catalyses the reaction 3-methyl-2-oxobutanoate + (6R)-5,10-methylene-5,6,7,8-tetrahydrofolate + H2O = 2-dehydropantoate + (6S)-5,6,7,8-tetrahydrofolate. It functions in the pathway cofactor biosynthesis; (R)-pantothenate biosynthesis; (R)-pantoate from 3-methyl-2-oxobutanoate: step 1/2. In terms of biological role, catalyzes the reversible reaction in which hydroxymethyl group from 5,10-methylenetetrahydrofolate is transferred onto alpha-ketoisovalerate to form ketopantoate. This chain is 3-methyl-2-oxobutanoate hydroxymethyltransferase, found in Rhodospirillum rubrum (strain ATCC 11170 / ATH 1.1.1 / DSM 467 / LMG 4362 / NCIMB 8255 / S1).